The chain runs to 199 residues: Holliday junction branch migration complex subunit RuvA (199 aa).

The interval 1-62 (MIAYIKGLLA…EDGIQFFGFA (62 aa)) is domain I. Residues 63–141 (KEDEKECFLL…GMAAVEHSTL (79 aa)) are domain II. The tract at residues 142 to 152 (QQSVITTGSGD) is flexible linker. Positions 152–199 (DEAVEALLALGYSQGEARDAVKKAQKSAPEEDLSALIKIALKELAPSR) are domain III.

This sequence belongs to the RuvA family. Homotetramer. Forms an RuvA(8)-RuvB(12)-Holliday junction (HJ) complex. HJ DNA is sandwiched between 2 RuvA tetramers; dsDNA enters through RuvA and exits via RuvB. An RuvB hexamer assembles on each DNA strand where it exits the tetramer. Each RuvB hexamer is contacted by two RuvA subunits (via domain III) on 2 adjacent RuvB subunits; this complex drives branch migration. In the full resolvosome a probable DNA-RuvA(4)-RuvB(12)-RuvC(2) complex forms which resolves the HJ.

The protein resides in the cytoplasm. Its function is as follows. The RuvA-RuvB-RuvC complex processes Holliday junction (HJ) DNA during genetic recombination and DNA repair, while the RuvA-RuvB complex plays an important role in the rescue of blocked DNA replication forks via replication fork reversal (RFR). RuvA specifically binds to HJ cruciform DNA, conferring on it an open structure. The RuvB hexamer acts as an ATP-dependent pump, pulling dsDNA into and through the RuvAB complex. HJ branch migration allows RuvC to scan DNA until it finds its consensus sequence, where it cleaves and resolves the cruciform DNA. In Desulforamulus reducens (strain ATCC BAA-1160 / DSM 100696 / MI-1) (Desulfotomaculum reducens), this protein is Holliday junction branch migration complex subunit RuvA.